The following is a 463-amino-acid chain: Ammonium transporter 1 (463 aa).

The Extracellular portion of the chain corresponds to methionine 1–asparagine 39. The chain crosses the membrane as a helical span at residues threonine 40–phenylalanine 60. Topologically, residues glutamate 61–glutamine 76 are cytoplasmic. The chain crosses the membrane as a helical span at residues isoleucine 77–phenylalanine 97. The Extracellular segment spans residues glycine 98–asparagine 127. The helical transmembrane segment at isoleucine 128–methionine 148 threads the bilayer. Over threonine 149–alanine 160 the chain is Cytoplasmic. A helical transmembrane segment spans residues phenylalanine 161–tryptophan 181. At glycine 182–aspartate 194 the chain is on the extracellular side. Residues phenylalanine 195–tyrosine 215 form a helical membrane-spanning segment. Topologically, residues valine 216–asparagine 233 are cytoplasmic. A helical membrane pass occupies residues leucine 234–glycine 254. The Extracellular segment spans residues serine 255–serine 265. Residues alanine 266–alanine 286 traverse the membrane as a helical segment. The Cytoplasmic portion of the chain corresponds to alanine 287–threonine 293. A helical transmembrane segment spans residues valine 294–isoleucine 314. At asparagine 315–serine 316 the chain is on the extracellular side. The chain crosses the membrane as a helical span at residues glutamine 317–leucine 337. The Cytoplasmic segment spans residues lysine 338–serine 351. The helical transmembrane segment at valine 352–valine 372 threads the bilayer. The Extracellular portion of the chain corresponds to asparagine 373–leucine 392. The helical transmembrane segment at leucine 393–isoleucine 413 threads the bilayer. Over aspartate 414 to lysine 463 the chain is Cytoplasmic.

The protein belongs to the ammonia transporter channel (TC 1.A.11.2) family.

It localises to the cell membrane. The protein resides in the endosome membrane. The protein localises to the lysosome membrane. It is found in the cytoplasmic vesicle. Its subcellular location is the phagosome membrane. Functionally, ammonium transporter that mediates the excretion of ammonium. Controls ammonium homeostasis during growth and development. Ammonium has been shown to function as a morphogen at multiple steps during the development. The sequence is that of Ammonium transporter 1 (amtA) from Dictyostelium discoideum (Social amoeba).